The chain runs to 152 residues: Dehydratase aurZ (152 aa).

Positions Pro-34–Thr-129 constitute an EthD domain.

This sequence belongs to the tpcK family.

The enzyme catalyses naphtopyrone YWA1 = norrubrofusarin + H2O + H(+). Its pathway is pigment biosynthesis. In terms of biological role, dehydratase; part of the gene cluster that mediates the biosynthesis of aurofusarin, a red mycelium pigment which is acting as a mycotoxin. The first step is performed by the polyketide synthase which condenses one acetyl-CoA and 6 malonyl-CoA units to form the first intermediate, the cyclic heptaketide and yellow pigment YWA1. The C2 hydroxyl group in the pyrone ring of YWA1 is probably formed during ring closure by an aldol-type cyclization reaction. The dehydratase aurZ then acts as the first tailoring enzyme in the aurofusarin biosynthetic pathway by converting YWA1 to nor-rubrofusarin. Nor-rubrofusarin is then methylated to rubrofusarin by the O-methyltransferase aurJ. Rubrofusarin is then transported across the plasma membrane by the rubrofusarin-specific pump aurT for further enzymatic processing by the extracellular complex composed of GIP1, aurF, aurO and aurS to yield aurofusarin. The sequence is that of Dehydratase aurZ from Gibberella zeae (strain ATCC MYA-4620 / CBS 123657 / FGSC 9075 / NRRL 31084 / PH-1) (Wheat head blight fungus).